Here is a 265-residue protein sequence, read N- to C-terminus: Thiazole synthase (265 aa).

Lys-107 serves as the catalytic Schiff-base intermediate with DXP. 1-deoxy-D-xylulose 5-phosphate-binding positions include Gly-168, 194 to 195, and 216 to 217; these read AG and NT.

It belongs to the ThiG family. As to quaternary structure, homotetramer. Forms heterodimers with either ThiH or ThiS.

The protein localises to the cytoplasm. It catalyses the reaction [ThiS sulfur-carrier protein]-C-terminal-Gly-aminoethanethioate + 2-iminoacetate + 1-deoxy-D-xylulose 5-phosphate = [ThiS sulfur-carrier protein]-C-terminal Gly-Gly + 2-[(2R,5Z)-2-carboxy-4-methylthiazol-5(2H)-ylidene]ethyl phosphate + 2 H2O + H(+). It functions in the pathway cofactor biosynthesis; thiamine diphosphate biosynthesis. Its function is as follows. Catalyzes the rearrangement of 1-deoxy-D-xylulose 5-phosphate (DXP) to produce the thiazole phosphate moiety of thiamine. Sulfur is provided by the thiocarboxylate moiety of the carrier protein ThiS. In vitro, sulfur can be provided by H(2)S. The polypeptide is Thiazole synthase (Pseudomonas aeruginosa (strain LESB58)).